A 75-amino-acid polypeptide reads, in one-letter code: Antimicrobial peptide Meucin-49-1 (75 aa).

Positions 1-22 (MNKKILLVIFIVTMLIVDEVNS) are cleaved as a signal peptide.

It belongs to the non-disulfide-bridged peptide (NDBP) superfamily. Long chain multifunctional peptide (group 2) family. As to expression, expressed by the venom gland.

The protein localises to the secreted. Its function is as follows. Antimicrobial peptide. In Mesobuthus eupeus (Lesser Asian scorpion), this protein is Antimicrobial peptide Meucin-49-1.